The sequence spans 368 residues: Histidinol-phosphate aminotransferase (368 aa).

Lys229 carries the post-translational modification N6-(pyridoxal phosphate)lysine.

Belongs to the class-II pyridoxal-phosphate-dependent aminotransferase family. Histidinol-phosphate aminotransferase subfamily. As to quaternary structure, homodimer. Pyridoxal 5'-phosphate serves as cofactor.

The catalysed reaction is L-histidinol phosphate + 2-oxoglutarate = 3-(imidazol-4-yl)-2-oxopropyl phosphate + L-glutamate. Its pathway is amino-acid biosynthesis; L-histidine biosynthesis; L-histidine from 5-phospho-alpha-D-ribose 1-diphosphate: step 7/9. This chain is Histidinol-phosphate aminotransferase, found in Acidovorax ebreus (strain TPSY) (Diaphorobacter sp. (strain TPSY)).